Reading from the N-terminus, the 217-residue chain is MKTLRFPAGLYGITPEWDDTDRLLAAVRAAAAGGMTALQLRRKLADERLRAAQARALAPLCRELGVVFLVNDHWKLALDVGADGAHLGRDDADPATVRAQAGAGLLLGVSCYNDLRRADALLAAGADYVAFGTVFASPTKPEAVHAPLQTLTEARARLLACPAPRPAVVAIGGITPANVSQVAQAGADSAAVISGLFEAPDIQAAARACAAAFSVNP.

4-amino-2-methyl-5-(diphosphooxymethyl)pyrimidine contacts are provided by residues 39-43 (QLRRK) and Asn-71. Mg(2+) is bound by residues Asp-72 and Asp-91. Position 110 (Ser-110) interacts with 4-amino-2-methyl-5-(diphosphooxymethyl)pyrimidine. 137–139 (SPT) is a 2-[(2R,5Z)-2-carboxy-4-methylthiazol-5(2H)-ylidene]ethyl phosphate binding site. Residue Lys-140 coordinates 4-amino-2-methyl-5-(diphosphooxymethyl)pyrimidine. 2-[(2R,5Z)-2-carboxy-4-methylthiazol-5(2H)-ylidene]ethyl phosphate contacts are provided by residues Gly-173 and 193-194 (IS).

Belongs to the thiamine-phosphate synthase family. Mg(2+) serves as cofactor.

The catalysed reaction is 2-[(2R,5Z)-2-carboxy-4-methylthiazol-5(2H)-ylidene]ethyl phosphate + 4-amino-2-methyl-5-(diphosphooxymethyl)pyrimidine + 2 H(+) = thiamine phosphate + CO2 + diphosphate. It catalyses the reaction 2-(2-carboxy-4-methylthiazol-5-yl)ethyl phosphate + 4-amino-2-methyl-5-(diphosphooxymethyl)pyrimidine + 2 H(+) = thiamine phosphate + CO2 + diphosphate. The enzyme catalyses 4-methyl-5-(2-phosphooxyethyl)-thiazole + 4-amino-2-methyl-5-(diphosphooxymethyl)pyrimidine + H(+) = thiamine phosphate + diphosphate. Its pathway is cofactor biosynthesis; thiamine diphosphate biosynthesis; thiamine phosphate from 4-amino-2-methyl-5-diphosphomethylpyrimidine and 4-methyl-5-(2-phosphoethyl)-thiazole: step 1/1. Functionally, condenses 4-methyl-5-(beta-hydroxyethyl)thiazole monophosphate (THZ-P) and 2-methyl-4-amino-5-hydroxymethyl pyrimidine pyrophosphate (HMP-PP) to form thiamine monophosphate (TMP). This chain is Thiamine-phosphate synthase, found in Bordetella bronchiseptica (strain ATCC BAA-588 / NCTC 13252 / RB50) (Alcaligenes bronchisepticus).